We begin with the raw amino-acid sequence, 386 residues long: Mannitol-1-phosphate 5-dehydrogenase (386 aa).

4-15 (ALHFGAGNIGRG) serves as a coordination point for NAD(+).

Belongs to the mannitol dehydrogenase family.

The enzyme catalyses D-mannitol 1-phosphate + NAD(+) = beta-D-fructose 6-phosphate + NADH + H(+). The sequence is that of Mannitol-1-phosphate 5-dehydrogenase from Caldanaerobacter subterraneus subsp. tengcongensis (strain DSM 15242 / JCM 11007 / NBRC 100824 / MB4) (Thermoanaerobacter tengcongensis).